The primary structure comprises 552 residues: CTP synthase (552 aa).

The amidoligase domain stretch occupies residues 1-265; it reads MTKYIFITGG…DEIVVRKLRL (265 aa). Position 13 (Ser-13) interacts with CTP. UTP is bound at residue Ser-13. ATP is bound by residues 14 to 19 and Asp-71; that span reads SLGKGI. Mg(2+) is bound by residues Asp-71 and Glu-139. Residues 146–148, 186–191, and Lys-222 contribute to the CTP site; these read DIE and KTKPTQ. UTP is bound by residues 186-191 and Lys-222; that span reads KTKPTQ. Positions 290-541 constitute a Glutamine amidotransferase type-1 domain; the sequence is TVAMVGKYVN…VRAARARSEG (252 aa). Gly-351 contacts L-glutamine. Residue Cys-378 is the Nucleophile; for glutamine hydrolysis of the active site. L-glutamine-binding positions include 379-382, Glu-402, and Arg-469; that span reads LGMQ. Residues His-514 and Glu-516 contribute to the active site.

It belongs to the CTP synthase family. Homotetramer.

The catalysed reaction is UTP + L-glutamine + ATP + H2O = CTP + L-glutamate + ADP + phosphate + 2 H(+). It catalyses the reaction L-glutamine + H2O = L-glutamate + NH4(+). The enzyme catalyses UTP + NH4(+) + ATP = CTP + ADP + phosphate + 2 H(+). The protein operates within pyrimidine metabolism; CTP biosynthesis via de novo pathway; CTP from UDP: step 2/2. Allosterically activated by GTP, when glutamine is the substrate; GTP has no effect on the reaction when ammonia is the substrate. The allosteric effector GTP functions by stabilizing the protein conformation that binds the tetrahedral intermediate(s) formed during glutamine hydrolysis. Inhibited by the product CTP, via allosteric rather than competitive inhibition. Its function is as follows. Catalyzes the ATP-dependent amination of UTP to CTP with either L-glutamine or ammonia as the source of nitrogen. Regulates intracellular CTP levels through interactions with the four ribonucleotide triphosphates. The protein is CTP synthase of Methylococcus capsulatus (strain ATCC 33009 / NCIMB 11132 / Bath).